Consider the following 2155-residue polypeptide: Polyketide synthase 2 (2155 aa).

The N-terminal acylcarrier protein transacylase domain (SAT) stretch occupies residues 7–244 (FIFGDQTGGF…IPIPIWAPYH (238 aa)). Residues 374-807 (DSKIAIIGMS…GGNSALLLED (434 aa)) form the Ketosynthase family 3 (KS3) domain. Active-site for beta-ketoacyl synthase activity residues include Cys546, His681, and His723. A malonyl-CoA:ACP transacylase (MAT) domain region spans residues 908 to 1213 (GFVFSGQGAQ…ASLHRKDDGW (306 aa)). Ser998 acts as the For acyl/malonyl transferase activity in catalysis. Residues 1290–1605 (TSSVQRIIRQ…RSLLNKVLPP (316 aa)) are product template (PT) domain. The interval 1294 to 1428 (QRIIRQTDGP…CLLRFADPTS (135 aa)) is N-terminal hotdog fold. The region spanning 1294–1600 (QRIIRQTDGP…FLGMSRSLLN (307 aa)) is the PKS/mFAS DH domain. His1327 serves as the catalytic Proton acceptor; for dehydratase activity. Residues 1455–1600 (TDSLLSKGIV…FLGMSRSLLN (146 aa)) form a C-terminal hotdog fold region. Asp1514 serves as the catalytic Proton donor; for dehydratase activity. The interval 1626-1654 (AASAKDTERRPLDIPTRAQRQPSSPQTGT) is disordered. The segment covering 1643–1654 (AQRQPSSPQTGT) has biased composition (polar residues). The 78-residue stretch at 1649-1726 (SPQTGTMGRI…ELKAFLGADQ (78 aa)) folds into the Carrier 1 domain. Ser1686 carries the post-translational modification O-(pantetheine 4'-phosphoryl)serine. A disordered region spans residues 1735–1765 (SSIGQHTPQTSDKGSGTLASQKTDGDTGPDT). Over residues 1736–1756 (SIGQHTPQTSDKGSGTLASQK) the composition is skewed to polar residues. One can recognise a Carrier 2 domain in the interval 1764 to 1838 (DTTLNRVCAI…ALQKALCGSE (75 aa)). An O-(pantetheine 4'-phosphoryl)serine modification is found at Ser1798. The interval 1873–2149 (ASPPHATSIL…MVEMGNLIGD (277 aa)) is thioesterase (TE) domain. Ser1979 serves as the catalytic For thioesterase activity.

In terms of biological role, polyketide synthase; part of the Pks2 gene cluster that mediates the formation of infectious structures (appressoria), enabling these fungi to kill insects faster. The product of the Pks2 gene cluster is different from the one of Pks1 and has still not been identified. This is Polyketide synthase 2 from Metarhizium anisopliae (strain ARSEF 549).